An 89-amino-acid polypeptide reads, in one-letter code: Large ribosomal subunit protein bL31B (89 aa).

This sequence belongs to the bacterial ribosomal protein bL31 family. Type B subfamily. In terms of assembly, part of the 50S ribosomal subunit.

The sequence is that of Large ribosomal subunit protein bL31B from Corynebacterium urealyticum (strain ATCC 43042 / DSM 7109).